Here is a 663-residue protein sequence, read N- to C-terminus: Putative ankyrin repeat protein R219 (663 aa).

5 ANK repeats span residues 91-118 (FRIK…GYKV), 119-148 (DFDS…KLSS), 200-229 (ANQQ…KDGT), 258-288 (DWHV…KINP), and 322-351 (YFSH…GITV).

This Acanthamoeba polyphaga mimivirus (APMV) protein is Putative ankyrin repeat protein R219.